The chain runs to 157 residues: Small ribosomal subunit protein uS7 (157 aa).

This sequence belongs to the universal ribosomal protein uS7 family. In terms of assembly, part of the 30S ribosomal subunit. Contacts proteins S9 and S11.

One of the primary rRNA binding proteins, it binds directly to 16S rRNA where it nucleates assembly of the head domain of the 30S subunit. Is located at the subunit interface close to the decoding center, probably blocks exit of the E-site tRNA. The protein is Small ribosomal subunit protein uS7 of Eikenella corrodens.